Consider the following 172-residue polypeptide: uncharacterized protein (172 aa).

Disordered regions lie at residues 1 to 39 (MAKVSNYNNNNNNNNNNNNNNNNNNNYNQNSNNNINSNN) and 90 to 112 (DLNGDDTFNDSNNDNSPSRGSIN). Residues 98–110 (NDSNNDNSPSRGS) show a composition bias toward low complexity.

This is an uncharacterized protein from Dictyostelium discoideum (Social amoeba).